A 277-amino-acid chain; its full sequence is 4-hydroxy-3-methylbut-2-enyl diphosphate reductase (277 aa).

Cys-12 provides a ligand contact to [4Fe-4S] cluster. (2E)-4-hydroxy-3-methylbut-2-enyl diphosphate-binding residues include His-36 and His-70. Dimethylallyl diphosphate contacts are provided by His-36 and His-70. Isopentenyl diphosphate is bound by residues His-36 and His-70. Cys-92 is a [4Fe-4S] cluster binding site. A (2E)-4-hydroxy-3-methylbut-2-enyl diphosphate-binding site is contributed by His-120. His-120 provides a ligand contact to dimethylallyl diphosphate. His-120 contributes to the isopentenyl diphosphate binding site. The active-site Proton donor is Glu-122. Residue Thr-158 coordinates (2E)-4-hydroxy-3-methylbut-2-enyl diphosphate. Cys-186 contacts [4Fe-4S] cluster. (2E)-4-hydroxy-3-methylbut-2-enyl diphosphate contacts are provided by Ser-214, Asn-216, and Ser-258. Dimethylallyl diphosphate contacts are provided by Ser-214, Asn-216, and Ser-258. Residues Ser-214, Asn-216, and Ser-258 each contribute to the isopentenyl diphosphate site.

It belongs to the IspH family. It depends on [4Fe-4S] cluster as a cofactor.

The catalysed reaction is isopentenyl diphosphate + 2 oxidized [2Fe-2S]-[ferredoxin] + H2O = (2E)-4-hydroxy-3-methylbut-2-enyl diphosphate + 2 reduced [2Fe-2S]-[ferredoxin] + 2 H(+). It carries out the reaction dimethylallyl diphosphate + 2 oxidized [2Fe-2S]-[ferredoxin] + H2O = (2E)-4-hydroxy-3-methylbut-2-enyl diphosphate + 2 reduced [2Fe-2S]-[ferredoxin] + 2 H(+). It functions in the pathway isoprenoid biosynthesis; dimethylallyl diphosphate biosynthesis; dimethylallyl diphosphate from (2E)-4-hydroxy-3-methylbutenyl diphosphate: step 1/1. Its pathway is isoprenoid biosynthesis; isopentenyl diphosphate biosynthesis via DXP pathway; isopentenyl diphosphate from 1-deoxy-D-xylulose 5-phosphate: step 6/6. In terms of biological role, catalyzes the conversion of 1-hydroxy-2-methyl-2-(E)-butenyl 4-diphosphate (HMBPP) into a mixture of isopentenyl diphosphate (IPP) and dimethylallyl diphosphate (DMAPP). Acts in the terminal step of the DOXP/MEP pathway for isoprenoid precursor biosynthesis. The protein is 4-hydroxy-3-methylbut-2-enyl diphosphate reductase of Campylobacter jejuni subsp. jejuni serotype O:23/36 (strain 81-176).